The chain runs to 70 residues: Large ribosomal subunit protein bL31c (70 aa).

The protein belongs to the bacterial ribosomal protein bL31 family. Type A subfamily. Part of the 50S ribosomal subunit.

The protein localises to the plastid. It localises to the chloroplast. Binds the 23S rRNA. The polypeptide is Large ribosomal subunit protein bL31c (Porphyra purpurea (Red seaweed)).